Consider the following 645-residue polypeptide: Glucans biosynthesis glucosyltransferase H (645 aa).

A disordered region spans residues 1–28 (MDGTVTLSPAPTDLPPVSSLDAGQPTLP). 7 helical membrane-spanning segments follow: residues 64–84 (LIGG…SVLW), 98–118 (LFVL…AGFI), 423–443 (APMW…GAGI), 465–485 (AIWI…LGYI), 504–524 (ALSI…VMYL), 558–578 (SYGG…LVSP), and 580–600 (LAAW…VVAV).

It belongs to the glycosyltransferase 2 family. OpgH subfamily.

Its subcellular location is the cell inner membrane. It functions in the pathway glycan metabolism; osmoregulated periplasmic glucan (OPG) biosynthesis. In terms of biological role, involved in the biosynthesis of osmoregulated periplasmic glucans (OPGs). The polypeptide is Glucans biosynthesis glucosyltransferase H (Xanthomonas campestris pv. campestris (strain 8004)).